The following is a 270-amino-acid chain: Phosphoserine phosphatase (270 aa).

The active-site Nucleophile is the Asp67. The Mg(2+) site is built by Asp67 and Asp69. Asp69 serves as the catalytic Proton donor. Residues Glu76, Arg112, 156 to 157 (SG), and Lys205 contribute to the substrate site. Residue Asp227 coordinates Mg(2+).

It belongs to the HAD-like hydrolase superfamily. SerB family. The cofactor is Mg(2+).

It catalyses the reaction O-phospho-L-serine + H2O = L-serine + phosphate. The enzyme catalyses O-phospho-D-serine + H2O = D-serine + phosphate. It participates in amino-acid biosynthesis; L-serine biosynthesis; L-serine from 3-phospho-D-glycerate: step 3/3. Catalyzes the last step in the biosynthesis of serine from carbohydrates. The reaction mechanism proceeds via the formation of a phosphoryl-enzyme intermediates. This is Phosphoserine phosphatase (aay) from Drosophila melanogaster (Fruit fly).